A 444-amino-acid chain; its full sequence is C4-dicarboxylate transport protein (444 aa).

Helical transmembrane passes span 19–39 (HLYF…HFYP), 55–75 (LVKM…IAGM), 90–110 (IYFL…SNIL), 161–181 (ILQV…VGDL), 199–219 (LVAI…AFTI), 230–250 (LAFL…VVLG), 343–363 (LLLV…AGFI), and 366–386 (AATL…ILGI).

The protein belongs to the dicarboxylate/amino acid:cation symporter (DAACS) (TC 2.A.23) family.

It localises to the cell inner membrane. In terms of biological role, responsible for the transport of dicarboxylates such as succinate, fumarate, and malate from the periplasm across the membrane. This is C4-dicarboxylate transport protein from Allorhizobium ampelinum (strain ATCC BAA-846 / DSM 112012 / S4) (Agrobacterium vitis (strain S4)).